Here is a 292-residue protein sequence, read N- to C-terminus: ATP synthase gamma chain (292 aa).

Belongs to the ATPase gamma chain family. As to quaternary structure, F-type ATPases have 2 components, CF(1) - the catalytic core - and CF(0) - the membrane proton channel. CF(1) has five subunits: alpha(3), beta(3), gamma(1), delta(1), epsilon(1). CF(0) has three main subunits: a, b and c.

It is found in the cell inner membrane. In terms of biological role, produces ATP from ADP in the presence of a proton gradient across the membrane. The gamma chain is believed to be important in regulating ATPase activity and the flow of protons through the CF(0) complex. The chain is ATP synthase gamma chain from Brucella abortus (strain S19).